The following is a 418-amino-acid chain: ATP-dependent Clp protease ATP-binding subunit ClpX (418 aa).

In terms of domain architecture, ClpX-type ZB spans 1–54; the sequence is MTRKDDESDQFFCSFCGKNQKEVKKLIAGPSVYICNECVSLCEEIIEDEDKESL. Residues Cys13, Cys16, Cys35, and Cys38 each coordinate Zn(2+). 120–127 provides a ligand contact to ATP; it reads PTGCGKTL.

This sequence belongs to the ClpX chaperone family. Component of the ClpX-ClpP complex. Forms a hexameric ring that, in the presence of ATP, binds to fourteen ClpP subunits assembled into a disk-like structure with a central cavity, resembling the structure of eukaryotic proteasomes.

Its function is as follows. ATP-dependent specificity component of the Clp protease. It directs the protease to specific substrates. Can perform chaperone functions in the absence of ClpP. The protein is ATP-dependent Clp protease ATP-binding subunit ClpX of Desulforapulum autotrophicum (strain ATCC 43914 / DSM 3382 / VKM B-1955 / HRM2) (Desulfobacterium autotrophicum).